Reading from the N-terminus, the 209-residue chain is Ribosomal RNA large subunit methyltransferase E (209 aa).

The S-adenosyl-L-methionine site is built by Gly63, Trp65, Asp83, Asp99, and Asp124. The active-site Proton acceptor is Lys164.

This sequence belongs to the class I-like SAM-binding methyltransferase superfamily. RNA methyltransferase RlmE family.

The protein localises to the cytoplasm. The catalysed reaction is uridine(2552) in 23S rRNA + S-adenosyl-L-methionine = 2'-O-methyluridine(2552) in 23S rRNA + S-adenosyl-L-homocysteine + H(+). In terms of biological role, specifically methylates the uridine in position 2552 of 23S rRNA at the 2'-O position of the ribose in the fully assembled 50S ribosomal subunit. This Buchnera aphidicola subsp. Cinara cedri (strain Cc) protein is Ribosomal RNA large subunit methyltransferase E.